The chain runs to 432 residues: MGKNVVVLGTQWGDEGKGKVVDLLTERAKYVVRYQGGHNAGHTLVINGEKTVLHLIPSGILRENVTSIIGNGVVLAPDALMKEMTDLEARGVPVRERLLLSEACPLILPYHVALDNAREKARGAKAIGTTGRGIGPAYEDKVARRGLRVGDLFNKETFAIKLKEIVDYHNFQLVHYYKEEAVDYQKVLDEVLAIADILTAMVVDVSELLDSARKRGDFMMFEGAQGTLLDIDHGTYPYVTSSNTTAGGVATGSGLGPRYVDYVLGIVKAYSTRVGAGPFPTELNDETGEFLRKQGNEYGATTGRSRRTGWLDIVAVRRAVQINSLSGFCMTKLDVLDGLKEVKLCVGYRMPDGREVDTTPLAAEGWEGIEPIYETMPGWSEVTFGVKEHSKLPQAALNYIKRVEELTGVPVDIISTGPDREETMILRDPFDA.

Residues 13 to 19 (GDEGKGK) and 41 to 43 (GHT) each bind GTP. Catalysis depends on Asp-14, which acts as the Proton acceptor. Mg(2+) contacts are provided by Asp-14 and Gly-41. IMP-binding positions include 14–17 (DEGK), 39–42 (NAGH), Thr-130, Arg-144, Gln-225, Thr-240, and Arg-304. His-42 serves as the catalytic Proton donor. Residue 300–306 (ATTGRSR) participates in substrate binding. GTP is bound by residues Arg-306, 332 to 334 (KLD), and 415 to 417 (STG).

The protein belongs to the adenylosuccinate synthetase family. Homodimer. Mg(2+) serves as cofactor.

It localises to the cytoplasm. The catalysed reaction is IMP + L-aspartate + GTP = N(6)-(1,2-dicarboxyethyl)-AMP + GDP + phosphate + 2 H(+). The protein operates within purine metabolism; AMP biosynthesis via de novo pathway; AMP from IMP: step 1/2. In terms of biological role, plays an important role in the de novo pathway of purine nucleotide biosynthesis. Catalyzes the first committed step in the biosynthesis of AMP from IMP. The protein is Adenylosuccinate synthetase of Yersinia enterocolitica serotype O:8 / biotype 1B (strain NCTC 13174 / 8081).